We begin with the raw amino-acid sequence, 109 residues long: uncharacterized protein (109 aa).

Residues 67–96 (YFGNKLWRPTPRSGQSGQSRPKTGPHGSQR) are disordered. A compositionally biased stretch (polar residues) spans 78-87 (RSGQSGQSRP).

This is an uncharacterized protein from Saccharomyces cerevisiae (strain ATCC 204508 / S288c) (Baker's yeast).